A 388-amino-acid chain; its full sequence is Staphopain A (388 aa).

The signal sequence occupies residues 1-25 (MKRNFPKLIALSLIFSLSITPIANA). Positions 26–214 (ESNSNIKAKD…TSQFKSNNYT (189 aa)) are excised as a propeptide. Active-site residues include Cys-238, His-334, and Asn-355.

Belongs to the peptidase C47 family. In terms of assembly, in the cytoplasm, prematurely activated/folded ScpA forms a stable non-covalent complex with ScpB. Cleavage leads to the activation of ScpA probably by an auto-catalytic manner.

The protein localises to the secreted. The enzyme catalyses Broad endopeptidase action on proteins including elastin, but rather limited hydrolysis of small-molecule substrates. Assays are conveniently made with hemoglobin, casein or Z-Phe-Arg-NHMec as substrate.. With respect to regulation, prematurely activated/folded staphopain A is inhibited by staphostatin A (ScpB), which is probably required to protect staphylococcal cytoplasmic proteins from degradation by ScpA. Functionally, cysteine protease that plays an important role in the inhibition of host innate immune response. Cleaves host elastins found in connective tissues, pulmonary surfactant protein A in the lungs, and the chemokine receptor CXCR2 on leukocytes. Proteolytic cleavage of surfactant protein A impairs bacterial phagocytosis by neutrophils while CXCR2 degradation blocks neutrophil activation and chemotaxis. Additionally, promotes vascular leakage by activating the plasma kallikerin/kinin system, resulting in hypotension. The protein is Staphopain A (sspP) of Staphylococcus aureus (strain MRSA252).